The primary structure comprises 177 residues: Peptidyl-prolyl cis-trans isomerase H (177 aa).

Ala2 carries the N-acetylalanine modification. The PPIase cyclophilin-type domain maps to 14–176; it reads FFDVSIGGQE…LPVVISQCGE (163 aa).

This sequence belongs to the cyclophilin-type PPIase family. PPIase H subfamily. As to quaternary structure, interacts directly with PRPF4. Part of a heteromeric complex containing PPIH, PRPF3 and PRPF4 that is stable in the absence of RNA. Component of the U4/U6-U5 tri-snRNP complex composed of the U4, U6 and U5 snRNAs and at least PRPF3, PRPF4, PRPF6, PRPF8, PRPF31, SNRNP200, TXNL4A, SNRNP40, DDX23, CD2BP2, PPIH, SNU13, EFTUD2, SART1 and USP39. Heterodimer with PRPF18.

Its subcellular location is the nucleus speckle. It is found in the cytoplasm. It carries out the reaction [protein]-peptidylproline (omega=180) = [protein]-peptidylproline (omega=0). With respect to regulation, inhibited by cyclosporin A. Functionally, PPIase that catalyzes the cis-trans isomerization of proline imidic peptide bonds in oligopeptides and may therefore assist protein folding. Participates in pre-mRNA splicing. May play a role in the assembly of the U4/U5/U6 tri-snRNP complex, one of the building blocks of the spliceosome. May act as a chaperone. The sequence is that of Peptidyl-prolyl cis-trans isomerase H (PPIH) from Homo sapiens (Human).